Consider the following 340-residue polypeptide: MAVTMYYEDDVEVSALAGKQIAVIGYGSQGHAHAQNLRDSGHNVIIGVRHGKSFDKAKEDGFETFEVGEAVAKADVIMVLAPDELQQSIYEEDIKPNLKAGSALGFAHGFNIHFGYIKVPEDVDVFMVAPKAPGHLVRRTYTEGFGTPALFVSHQNASGHAREIAMDWAKGIGCARVGIIETTFKEETEEDLFGEQAVLCGGLTALVEAGFETLTEAGYAGELAYFEVLHEMKLIVDLMYEGGFTKMRQSISNTAEFGDYVTGPRIITDAVKKNMKLVLADIQSGKFAQDFVDDFKAGRPKLTAYREAAKNLEIEKIGAELRKAMPFTQSGDDDAFKIYQ.

The 180-residue stretch at 3–182 folds into the KARI N-terminal Rossmann domain; it reads VTMYYEDDVE…GCARVGIIET (180 aa). NADP(+)-binding positions include 26-29, Arg49, Ser53, and 83-86; these read YGSQ and DELQ. His108 is a catalytic residue. Gly134 is a binding site for NADP(+). Residues 183 to 328 enclose the KARI C-terminal knotted domain; it reads TFKEETEEDL…AELRKAMPFT (146 aa). The Mg(2+) site is built by Asp191, Glu195, Glu227, and Glu231. Ser252 lines the substrate pocket.

This sequence belongs to the ketol-acid reductoisomerase family. Mg(2+) serves as cofactor.

It catalyses the reaction (2R)-2,3-dihydroxy-3-methylbutanoate + NADP(+) = (2S)-2-acetolactate + NADPH + H(+). The enzyme catalyses (2R,3R)-2,3-dihydroxy-3-methylpentanoate + NADP(+) = (S)-2-ethyl-2-hydroxy-3-oxobutanoate + NADPH + H(+). It functions in the pathway amino-acid biosynthesis; L-isoleucine biosynthesis; L-isoleucine from 2-oxobutanoate: step 2/4. The protein operates within amino-acid biosynthesis; L-valine biosynthesis; L-valine from pyruvate: step 2/4. Its function is as follows. Involved in the biosynthesis of branched-chain amino acids (BCAA). Catalyzes an alkyl-migration followed by a ketol-acid reduction of (S)-2-acetolactate (S2AL) to yield (R)-2,3-dihydroxy-isovalerate. In the isomerase reaction, S2AL is rearranged via a Mg-dependent methyl migration to produce 3-hydroxy-3-methyl-2-ketobutyrate (HMKB). In the reductase reaction, this 2-ketoacid undergoes a metal-dependent reduction by NADPH to yield (R)-2,3-dihydroxy-isovalerate. The chain is Ketol-acid reductoisomerase (NADP(+)) from Lactococcus lactis subsp. lactis (strain IL1403) (Streptococcus lactis).